Consider the following 506-residue polypeptide: MVSIRPDEISAILKQQIEDYDKSVSVTNVGTVLQVGDGIARVYGLQQVMAGELVEFEDGTEGIALNLEDDNVGIVLMGEGLGIQEGSTVRATGKIASVPVGDAMLGRVVNPLGVAIDGKGDLATTESRLIESPAPGIIQRKSVHEPMQTGITAIDAMIPIGRGQRELIIGDRQTGKTAICIDTILNQADQDVVCVYVAIGQKAASVAQVTEVLRERGALDYTVVVAANASEPAALQYLAPYTGASIAEYFMYKGKATLVIYDDLTKQAQAYRQMSLLLRRPPGREAYPGDVFYCHSRLLERAAKLSDAMGKGSMTALPIIETQAGDVSAYIPTNVISITDGQVFLSSDLFNSGLRPAINVGISVSRVGGAAQTKAIKKIAGTLKLELAQFDELAAFSQFASDLDAATQQQLSRGKRLRELLKQPQFSPLILAEQVAIVYAGVKGLIDDVPVEEVVQFSRELREYLKSNKPEFISKIQTEKVLSPEAETTLKEAIAEVVSTMLASAN.

Residue 170 to 177 (GDRQTGKT) participates in ATP binding.

It belongs to the ATPase alpha/beta chains family. In terms of assembly, F-type ATPases have 2 components, CF(1) - the catalytic core - and CF(0) - the membrane proton channel. CF(1) has five subunits: alpha(3), beta(3), gamma(1), delta(1), epsilon(1). CF(0) has four main subunits: a(1), b(1), b'(1) and c(9-12).

The protein resides in the cellular thylakoid membrane. The enzyme catalyses ATP + H2O + 4 H(+)(in) = ADP + phosphate + 5 H(+)(out). Functionally, produces ATP from ADP in the presence of a proton gradient across the membrane. The alpha chain is a regulatory subunit. This chain is ATP synthase subunit alpha, found in Synechococcus sp. (strain CC9311).